The primary structure comprises 381 residues: 3-dehydroquinate synthase (381 aa).

NAD(+) contacts are provided by residues 81 to 86, 115 to 119, 139 to 140, lysine 152, and lysine 161; these read EGESSK, GVIGD, and TS. Zn(2+) contacts are provided by glutamate 194, histidine 256, and histidine 274.

This sequence belongs to the sugar phosphate cyclases superfamily. Dehydroquinate synthase family. The cofactor is Co(2+). Zn(2+) is required as a cofactor. It depends on NAD(+) as a cofactor.

It localises to the cytoplasm. The enzyme catalyses 7-phospho-2-dehydro-3-deoxy-D-arabino-heptonate = 3-dehydroquinate + phosphate. It functions in the pathway metabolic intermediate biosynthesis; chorismate biosynthesis; chorismate from D-erythrose 4-phosphate and phosphoenolpyruvate: step 2/7. Catalyzes the conversion of 3-deoxy-D-arabino-heptulosonate 7-phosphate (DAHP) to dehydroquinate (DHQ). This Rhodopseudomonas palustris (strain ATCC BAA-98 / CGA009) protein is 3-dehydroquinate synthase.